The sequence spans 623 residues: Protein EDS1 (623 aa).

Ala-2 bears the N-acetylalanine mark. The Nucleophile role is filled by Ser-123. Catalysis depends on charge relay system residues Asp-187 and His-317. The stretch at 358-383 (VQAALEEEKKRVENQKKIIQVIEQER) forms a coiled coil.

As to quaternary structure, homodimer. Interacts with RPS4, RPS6, SNC1, SRFR1, AvrRps4 and HopA1. Part of a nuclear complex made of EDS1, PAD4 and SAG101, that can be redirected to the cytoplasm in the presence of an extranuclear form of EDS1. Interacts (via N-terminus) with PAD4 (via N-terminus). Interacts (via N-terminus) with SAG101. EDS1-SAG101 and EDS1-PAD4 form separate complexes in pathogen-unchallenged cells. Part of a nuclear protein complex made of VICTR, PAD4 and EDS1. Interacts with VICTR.

The protein resides in the nucleus. It localises to the cytoplasm. It is found in the microsome. Functionally, positive regulator of basal resistance and of effector-triggered immunity specifically mediated by TIR-NB-LRR (TNL) resistance proteins. Disruption by bacterial effector of EDS1-TIR-NB-LRR resistance protein interactions constitutes the first step in resistance activation. Acts redundantly with salicylic acid to regulate resistance gene-mediated signaling. Triggers early plant defenses and hypersensitive response independently of PAD4, and then recruits PAD4 to potentiate plant defenses through the accumulation of salicylic acid. Nuclear localization is essential for basal and TNL-conditioned immunity and for reprogramming defense gene expression, while cytoplasmic EDS1 is required to induce a complete immune response. Heterodimerization with PAD4 and/or SGA101 is necessary for TNL-mediated effector-triggered immunity. Contributes to nonhost resistance against E.amylovora. Loss of EDS1-PAD4 interaction compromises basal but not TNL-triggered resistance. Necessary for systemic acquired resistance (SAR) signal generation and perception. Has no direct lipase activity. Putative lipase activity is dispensable for immune functions. In Arabidopsis thaliana (Mouse-ear cress), this protein is Protein EDS1.